We begin with the raw amino-acid sequence, 605 residues long: UvrABC system protein C (605 aa).

One can recognise a GIY-YIG domain in the interval 15–92; it reads GLPGCYLMKN…IQKHQPYFNI (78 aa). A UVR domain is found at 197 to 232; that stretch reads GHAKKDLTQRMEKAAADMAYERAGDLRDQIRYIEAT.

The protein belongs to the UvrC family. Interacts with UvrB in an incision complex.

It localises to the cytoplasm. The UvrABC repair system catalyzes the recognition and processing of DNA lesions. UvrC both incises the 5' and 3' sides of the lesion. The N-terminal half is responsible for the 3' incision and the C-terminal half is responsible for the 5' incision. This Levilactobacillus brevis (strain ATCC 367 / BCRC 12310 / CIP 105137 / JCM 1170 / LMG 11437 / NCIMB 947 / NCTC 947) (Lactobacillus brevis) protein is UvrABC system protein C.